Consider the following 105-residue polypeptide: Large ribosomal subunit protein uL24 (105 aa).

Belongs to the universal ribosomal protein uL24 family. As to quaternary structure, part of the 50S ribosomal subunit.

In terms of biological role, one of two assembly initiator proteins, it binds directly to the 5'-end of the 23S rRNA, where it nucleates assembly of the 50S subunit. One of the proteins that surrounds the polypeptide exit tunnel on the outside of the subunit. This is Large ribosomal subunit protein uL24 from Nitrosospira multiformis (strain ATCC 25196 / NCIMB 11849 / C 71).